The primary structure comprises 360 residues: DNA ADP-ribosyl glycohydrolase (360 aa).

A Macro domain is found at 1–155 (MLRFVRGNLL…VYEPVENPKA (155 aa)). Residues 8 to 9 (NL), 20 to 22 (TVN), 31 to 34 (VALQ), and Thr-79 each bind ADP-D-ribose. The active-site Nucleophile is the Lys-80. Residue 117 to 121 (GAGNG) coordinates ADP-D-ribose. An interaction with DarT region spans residues 167–338 (LTPARAALLK…VALDALLKRG (172 aa)).

This sequence belongs to the DarG ADP-ribosyl glycohydrolase family. Interacts (via C-terminus) with cognate toxin DarT; this heterodimeric complex neutralizes the toxic effect of DarT by preventing ssDNA binding to DarT and consequently inactivating the toxin by direct protein-protein interactions.

It carries out the reaction an N-(ADP-alpha-D-ribosyl)-thymidine in DNA + H2O = a thymidine in DNA + ADP-D-ribose. Antitoxin component of the hybrid type II/IV toxin-antitoxin (TA) system DarTG, which plays a crucial role in controlling bacterial growth and bacteriophage infection. De-ADP-ribosylates DNA modified on thymidine by its cognate toxin DarT, which neutralizes the activity of cognate toxin DarT. Upon expression in E.coli neutralizes the effect of cognate toxin DarT. Upon expression in M.tuberculosis neutralizes the toxic effects of endogenous DarT. This chain is DNA ADP-ribosyl glycohydrolase, found in Thermus aquaticus (strain ATCC BAA-2747 / Y51MC23).